Reading from the N-terminus, the 288-residue chain is ATP synthase gamma chain (288 aa).

Belongs to the ATPase gamma chain family. In terms of assembly, F-type ATPases have 2 components, CF(1) - the catalytic core - and CF(0) - the membrane proton channel. CF(1) has five subunits: alpha(3), beta(3), gamma(1), delta(1), epsilon(1). CF(0) has three main subunits: a, b and c.

It localises to the cell inner membrane. Produces ATP from ADP in the presence of a proton gradient across the membrane. The gamma chain is believed to be important in regulating ATPase activity and the flow of protons through the CF(0) complex. This Chromobacterium violaceum (strain ATCC 12472 / DSM 30191 / JCM 1249 / CCUG 213 / NBRC 12614 / NCIMB 9131 / NCTC 9757 / MK) protein is ATP synthase gamma chain.